Consider the following 504-residue polypeptide: Anaerobic nitric oxide reductase transcription regulator NorR (504 aa).

Residue Asp57 is modified to 4-aspartylphosphate. The region spanning 187 to 416 (MIGLSPGMTQ…LEHAIHRAVV (230 aa)) is the Sigma-54 factor interaction domain. Residues 215–222 (GETGTGKE) and 278–287 (ADNGTLFLDE) each bind ATP. A DNA-binding region (H-T-H motif) is located at residues 479 to 498 (WAACARMLETDVANLHRLAK).

The protein operates within nitrogen metabolism; nitric oxide reduction. In terms of biological role, required for the expression of anaerobic nitric oxide (NO) reductase, acts as a transcriptional activator for at least the norVW operon. Activation also requires sigma-54. This Shigella sonnei (strain Ss046) protein is Anaerobic nitric oxide reductase transcription regulator NorR.